Here is a 556-residue protein sequence, read N- to C-terminus: Endoplasmic reticulum membrane protein 65 (556 aa).

The Cytoplasmic portion of the chain corresponds to 1–87 (MQHKDTAVAK…IRIPMFLEKF (87 aa)). The residue at position 22 (Ser-22) is a Phosphoserine. Residues 88-108 (MLFALLTSLDCFLYYFTVLPI) traverse the membrane as a helical segment. The Lumenal portion of the chain corresponds to 109–151 (RLIKGYVKQFKSYRQHYRLQQRSGHKNKIPFRYRITSREYKER). Residues 152-172 (CMIFIIVISSILLSKLDTSKL) traverse the membrane as a helical segment. Topologically, residues 173–224 (YHRIKRQSTMKLYMLFSVLEMADKMLASLGQSLLTVMLSRKNSERILLHKCL) are cytoplasmic. The chain crosses the membrane as a helical span at residues 225–245 (LVSMSLTYVTIHGYVLVYQAI). The Lumenal segment spans residues 246 to 330 (SLNIAVNSYS…INFWSPRSTL (85 aa)). A glycan (N-linked (GlcNAc...) asparagine) is linked at Asn-318. The helical transmembrane segment at 331-351 (SIVINILCGPMVSVVGSEVLV) threads the bilayer. The Cytoplasmic segment spans residues 352–391 (DWAKHAYITKFNRIRPQIYDKFYYIIYKDYSTRTHKLEDR). Residues 392-412 (LGLPLPAFVVLFIVMVRPTLF) traverse the membrane as a helical segment. At 413 to 428 (KSSEPSYLPSLFRILF) the chain is on the lumenal side. Residues 429 to 449 (MGASVFLLALLAKFTLDLILI) form a helical membrane-spanning segment. Topologically, residues 450–556 (KWSKRIEQRF…RYKMVSKRIW (107 aa)) are cytoplasmic.

It belongs to the TAPT1 family. In terms of assembly, interacts with SLP1.

Its subcellular location is the endoplasmic reticulum membrane. It localises to the mitochondrion. In terms of biological role, may be involved in membrane protein folding. This chain is Endoplasmic reticulum membrane protein 65, found in Saccharomyces cerevisiae (strain ATCC 204508 / S288c) (Baker's yeast).